A 192-amino-acid polypeptide reads, in one-letter code: MSEYLLLLISTVLVNNFVLVKFLGLCPFMGVSSKLESAIGMSMATTFVLTLASILSYLVNQYLLLPFDLSYLRTMSFILVIAVVVQFTEMVVQKTSASLHRALGIYLPLITTNCAVLGVALLNVNEKHDFIQSAIYGFGAAVGFSLVLILFSAMRERLAAADVPMPFKGGAIAMITAGLMSLAFMGFTGLVK.

6 helical membrane-spanning segments follow: residues 5-25, 39-59, 65-85, 102-122, 134-154, and 171-191; these read LLLL…FLGL, IGMS…SYLV, LPFD…AVVV, ALGI…VALL, AIYG…FSAM, and AIAM…TGLV.

This sequence belongs to the NqrDE/RnfAE family. The complex is composed of six subunits: RnfA, RnfB, RnfC, RnfD, RnfE and RnfG.

It is found in the cell inner membrane. Functionally, part of a membrane-bound complex that couples electron transfer with translocation of ions across the membrane. The chain is Ion-translocating oxidoreductase complex subunit A from Shewanella sp. (strain ANA-3).